The sequence spans 591 residues: Dihydroxyacetone kinase 2 (591 aa).

A DhaK domain is found at 8–344 (SDGNIVTPYL…FDYPTTASGW (337 aa)). A disordered region spans residues 40–59 (ASAPNSGNPPKVSLVSGGGS). Substrate is bound by residues 58–61 (GSGH), lysine 109, and aspartate 114. Histidine 223 serves as the catalytic Tele-hemiaminal-histidine intermediate. Residues 384-587 (DTFAKILLAG…LAALLDGFVT (204 aa)) form the DhaL domain. ATP contacts are provided by residues 413–416 (DGDC), 459–460 (TS), 511–512 (TL), and 572–574 (DPG).

Belongs to the dihydroxyacetone kinase (DAK) family.

The catalysed reaction is dihydroxyacetone + ATP = dihydroxyacetone phosphate + ADP + H(+). The enzyme catalyses D-glyceraldehyde + ATP = D-glyceraldehyde 3-phosphate + ADP + H(+). The protein operates within polyol metabolism; glycerol fermentation; glycerone phosphate from glycerol (oxidative route): step 2/2. Its function is as follows. Catalyzes both the phosphorylation of dihydroxyacetone and of glyceraldehyde. This Saccharomyces cerevisiae (strain ATCC 204508 / S288c) (Baker's yeast) protein is Dihydroxyacetone kinase 2 (DAK2).